A 461-amino-acid chain; its full sequence is Cysteine--tRNA ligase (461 aa).

Position 28 (cysteine 28) interacts with Zn(2+). Residues 30–40 (ITIYDLCHIGH) carry the 'HIGH' region motif. Cysteine 209, histidine 234, and glutamate 238 together coordinate Zn(2+). The short motif at 266-270 (KMSKS) is the 'KMSKS' region element. Lysine 269 lines the ATP pocket.

This sequence belongs to the class-I aminoacyl-tRNA synthetase family. Monomer. The cofactor is Zn(2+).

It is found in the cytoplasm. The catalysed reaction is tRNA(Cys) + L-cysteine + ATP = L-cysteinyl-tRNA(Cys) + AMP + diphosphate. This is Cysteine--tRNA ligase from Yersinia pseudotuberculosis serotype O:3 (strain YPIII).